A 93-amino-acid chain; its full sequence is DNA/RNA-binding protein Alba 2 (93 aa).

It belongs to the histone-like Alba family.

The protein resides in the cytoplasm. It localises to the chromosome. In terms of biological role, binds double-stranded DNA tightly but without sequence specificity. Involved in DNA compaction. This Methanopyrus kandleri (strain AV19 / DSM 6324 / JCM 9639 / NBRC 100938) protein is DNA/RNA-binding protein Alba 2.